We begin with the raw amino-acid sequence, 189 residues long: Isopentenyl-diphosphate Delta-isomerase (189 aa).

Mn(2+) contacts are provided by His-27 and His-34. The Nudix hydrolase domain maps to 32-171 (PLHFAFSTYI…PFVFSPWMVD (140 aa)). Cys-69 is an active-site residue. His-71 contributes to the Mn(2+) binding site. Glu-89 lines the Mg(2+) pocket. Mn(2+)-binding residues include Glu-119 and Glu-121. Glu-121 is a catalytic residue.

Belongs to the IPP isomerase type 1 family. Mg(2+) serves as cofactor. Mn(2+) is required as a cofactor.

The protein localises to the cytoplasm. The enzyme catalyses isopentenyl diphosphate = dimethylallyl diphosphate. It functions in the pathway isoprenoid biosynthesis; dimethylallyl diphosphate biosynthesis; dimethylallyl diphosphate from isopentenyl diphosphate: step 1/1. In terms of biological role, catalyzes the 1,3-allylic rearrangement of the homoallylic substrate isopentenyl (IPP) to its highly electrophilic allylic isomer, dimethylallyl diphosphate (DMAPP). In Corynebacterium glutamicum (strain R), this protein is Isopentenyl-diphosphate Delta-isomerase.